Consider the following 61-residue polypeptide: Large ribosomal subunit protein uL30 (61 aa).

This sequence belongs to the universal ribosomal protein uL30 family. Part of the 50S ribosomal subunit.

This Exiguobacterium sibiricum (strain DSM 17290 / CCUG 55495 / CIP 109462 / JCM 13490 / 255-15) protein is Large ribosomal subunit protein uL30.